An 83-amino-acid polypeptide reads, in one-letter code: Putative potassium channel toxin Ts20 (83 aa).

Positions M1–A18 are cleaved as a signal peptide.

Post-translationally, contains 3 disulfide bonds. In terms of tissue distribution, expressed by the venom gland.

The protein resides in the secreted. Reversibly inhibits potassium channels. This Tityus serrulatus (Brazilian scorpion) protein is Putative potassium channel toxin Ts20.